Consider the following 111-residue polypeptide: Large ribosomal subunit protein uL22 (111 aa).

Belongs to the universal ribosomal protein uL22 family. As to quaternary structure, part of the 50S ribosomal subunit.

Its function is as follows. This protein binds specifically to 23S rRNA; its binding is stimulated by other ribosomal proteins, e.g. L4, L17, and L20. It is important during the early stages of 50S assembly. It makes multiple contacts with different domains of the 23S rRNA in the assembled 50S subunit and ribosome. In terms of biological role, the globular domain of the protein is located near the polypeptide exit tunnel on the outside of the subunit, while an extended beta-hairpin is found that lines the wall of the exit tunnel in the center of the 70S ribosome. The chain is Large ribosomal subunit protein uL22 from Citrifermentans bemidjiense (strain ATCC BAA-1014 / DSM 16622 / JCM 12645 / Bem) (Geobacter bemidjiensis).